The following is a 1285-amino-acid chain: Ataxin-2 (1285 aa).

Disordered regions lie at residues 1-85 (MRSS…PGSR), 111-178 (ARAC…SPGA), and 197-224 (PVAS…GLPQ). A compositionally biased stretch (basic residues) spans 29 to 38 (SLPRTARRGG). Positions 48-65 (AGPPPRGPGAPPRGPRSP) are enriched in pro residues. Positions 128–144 (SSSARPAPGCPRPACEP) are enriched in low complexity. Gly residues predominate over residues 205 to 214 (AGGGRPGLGR). 2 positions are modified to phosphoserine: Ser218 and Ser219. One can recognise a Sm domain in the interval 237 to 314 (RMVHILTSVV…FVVVQFKDTD (78 aa)). Residues Ser362 and Ser435 each carry the phosphoserine modification. 2 stretches are compositionally biased toward basic and acidic residues: residues 428-440 (ALEN…EEKY) and 447-461 (CSDR…RDNK). 2 disordered regions span residues 428-925 (ALEN…HQQP) and 1111-1191 (AALH…QSSF). At Ser477 the chain carries Phosphoserine. A compositionally biased stretch (polar residues) spans 498 to 510 (ASHTSDFNPNAGS). Phosphoserine is present on Ser523. The span at 526 to 552 (PSHSSRPPSRYQSGPNSLPPRAATHTR) shows a compositional bias: low complexity. Residues 554–567 (PSRPPSRPSRPPSH) are compositionally biased toward pro residues. At Ser593 the chain carries Phosphoserine. A compositionally biased stretch (basic residues) spans 596 to 606 (AQRHPRNHRVS). An Asymmetric dimethylarginine; alternate modification is found at Arg609. Arg609 carries the post-translational modification Omega-N-methylarginine; alternate. Phosphoserine occurs at positions 611 and 653. The span at 662 to 672 (PRQSSIGNSPS) shows a compositional bias: polar residues. The segment covering 685-694 (PAEAVSMPVP) has biased composition (low complexity). Ser697 is subject to Phosphoserine. Thr710 carries the phosphothreonine modification. Over residues 737 to 746 (ASETSPSFSK) the composition is skewed to polar residues. A phosphoserine mark is found at Ser741 and Ser753. Over residues 757-773 (SEHRKQIDDLKKFKNDF) the composition is skewed to basic and acidic residues. Polar residues predominate over residues 776–789 (QPSSTSESMDQLLS). The segment covering 790–813 (KNREGEKSRDLIKDKTEASAKDSF) has biased composition (basic and acidic residues). A compositionally biased stretch (low complexity) spans 814–838 (IDSSSSSSNCTSGSSKTNSPSISPS). 7 positions are modified to phosphoserine: Ser827, Ser828, Ser832, Ser836, Ser838, Ser859, and Ser860. Residues 851 to 862 (VTSQGVQTSSPA) are compositionally biased toward polar residues. Residue Lys864 forms a Glycyl lysine isopeptide (Lys-Gly) (interchain with G-Cter in SUMO2) linkage. Residues 864–881 (KQEKDDREEKKDTTEQVR) are compositionally biased toward basic and acidic residues. 2 stretches are compositionally biased toward low complexity: residues 896–907 (SFSQPKPSTTPT) and 1128–1165 (GQQQ…QQSA).

It belongs to the ataxin-2 family. As to quaternary structure, interacts with RBFOX1. Monomer. Can also form homodimers. Interacts with polyribosomes. Interacts with EGFR. Interacts with SH3GL3. Interacts with SH3GL2, SH3KBP1 and CBL. Interacts with ATXN2L. Expressed in the heart, lung, liver, kidney, skeletal muscle, spleen and intestine. Predominant expression was seen in the brain where a high level expression was found in the pyramidal cortical neurons, large brain stem neurons and cerebellar Purkinje cells. All three isoforms were found in all the tissues except skeletal muscle where only isoform 1 was found.

The protein resides in the cytoplasm. In terms of biological role, involved in EGFR trafficking, acting as negative regulator of endocytic EGFR internalization at the plasma membrane. The chain is Ataxin-2 (Atxn2) from Mus musculus (Mouse).